A 678-amino-acid chain; its full sequence is Vitrin (678 aa).

The N-terminal stretch at methionine 1–serine 26 is a signal peptide. Residues threonine 40–phenylalanine 133 form the LCCL domain. Intrachain disulfides connect cysteine 46–cysteine 62 and cysteine 66–cysteine 86. Over residues serine 154 to alanine 168 the composition is skewed to polar residues. Disordered regions lie at residues serine 154–threonine 177 and threonine 199–phenylalanine 257. Residues threonine 199 to proline 216 are compositionally biased toward low complexity. Positions serine 230 to arginine 240 are enriched in polar residues. 2 VWFA domains span residues aspartate 293–valine 478 and aspartate 495–isoleucine 668. 2 N-linked (GlcNAc...) asparagine glycosylation sites follow: asparagine 390 and asparagine 520.

In terms of assembly, binds dermatan sulfate and chondroitin sulfate.

It is found in the secreted. The protein localises to the extracellular space. Its subcellular location is the extracellular matrix. In terms of biological role, promotes matrix assembly and cell adhesiveness. Plays a role in spinal cord formation by regulating the proliferation and differentiation of neural stem cells. This Homo sapiens (Human) protein is Vitrin (VIT).